The following is a 491-amino-acid chain: UDP-N-acetylmuramoyl-L-alanyl-D-glutamate--2,6-diaminopimelate ligase (491 aa).

S30 is a binding site for UDP-N-acetyl-alpha-D-muramoyl-L-alanyl-D-glutamate. 108–114 contacts ATP; it reads GTNGKTT. Residues N149, 150–151, S177, and R185 each bind UDP-N-acetyl-alpha-D-muramoyl-L-alanyl-D-glutamate; that span reads TT. K217 carries the N6-carboxylysine modification. Residues R383, 407–410, G457, and E461 each bind meso-2,6-diaminopimelate; that span reads DNPR. The Meso-diaminopimelate recognition motif signature appears at 407–410; sequence DNPR.

The protein belongs to the MurCDEF family. MurE subfamily. Mg(2+) serves as cofactor. In terms of processing, carboxylation is probably crucial for Mg(2+) binding and, consequently, for the gamma-phosphate positioning of ATP.

The protein localises to the cytoplasm. The enzyme catalyses UDP-N-acetyl-alpha-D-muramoyl-L-alanyl-D-glutamate + meso-2,6-diaminopimelate + ATP = UDP-N-acetyl-alpha-D-muramoyl-L-alanyl-gamma-D-glutamyl-meso-2,6-diaminopimelate + ADP + phosphate + H(+). Its pathway is cell wall biogenesis; peptidoglycan biosynthesis. In terms of biological role, catalyzes the addition of meso-diaminopimelic acid to the nucleotide precursor UDP-N-acetylmuramoyl-L-alanyl-D-glutamate (UMAG) in the biosynthesis of bacterial cell-wall peptidoglycan. The sequence is that of UDP-N-acetylmuramoyl-L-alanyl-D-glutamate--2,6-diaminopimelate ligase from Bacillus cereus (strain ATCC 14579 / DSM 31 / CCUG 7414 / JCM 2152 / NBRC 15305 / NCIMB 9373 / NCTC 2599 / NRRL B-3711).